We begin with the raw amino-acid sequence, 348 residues long: Sulfate/thiosulfate import ATP-binding protein CysA (348 aa).

One can recognise an ABC transporter domain in the interval 3-237 (IRIQELRKQF…PSSPFVYSFV (235 aa)). ATP is bound at residue 35 to 42 (GPSGSGKT).

This sequence belongs to the ABC transporter superfamily. Sulfate/tungstate importer (TC 3.A.1.6) family. In terms of assembly, the complex is composed of two ATP-binding proteins (CysA), two transmembrane proteins (CysT and CysW) and a solute-binding protein (CysP).

Its subcellular location is the cell inner membrane. It catalyses the reaction sulfate(out) + ATP + H2O = sulfate(in) + ADP + phosphate + H(+). It carries out the reaction thiosulfate(out) + ATP + H2O = thiosulfate(in) + ADP + phosphate + H(+). In terms of biological role, part of the ABC transporter complex CysAWTP involved in sulfate/thiosulfate import. Responsible for energy coupling to the transport system. This Xylella fastidiosa (strain Temecula1 / ATCC 700964) protein is Sulfate/thiosulfate import ATP-binding protein CysA.